The chain runs to 253 residues: Imidazole glycerol phosphate synthase subunit HisF (253 aa).

Catalysis depends on residues aspartate 11 and aspartate 130.

It belongs to the HisA/HisF family. Heterodimer of HisH and HisF.

It localises to the cytoplasm. It carries out the reaction 5-[(5-phospho-1-deoxy-D-ribulos-1-ylimino)methylamino]-1-(5-phospho-beta-D-ribosyl)imidazole-4-carboxamide + L-glutamine = D-erythro-1-(imidazol-4-yl)glycerol 3-phosphate + 5-amino-1-(5-phospho-beta-D-ribosyl)imidazole-4-carboxamide + L-glutamate + H(+). The protein operates within amino-acid biosynthesis; L-histidine biosynthesis; L-histidine from 5-phospho-alpha-D-ribose 1-diphosphate: step 5/9. In terms of biological role, IGPS catalyzes the conversion of PRFAR and glutamine to IGP, AICAR and glutamate. The HisF subunit catalyzes the cyclization activity that produces IGP and AICAR from PRFAR using the ammonia provided by the HisH subunit. This chain is Imidazole glycerol phosphate synthase subunit HisF, found in Clostridium botulinum (strain Kyoto / Type A2).